Here is a 241-residue protein sequence, read N- to C-terminus: Cysteine-rich secretory protein 3 (241 aa).

An N-terminal signal peptide occupies residues 1-19 (MALMLVLFFLAAVLPPSLL). Positions 44 to 170 (SKHNQLRRKV…PLRYFYVCRY (127 aa)) constitute an SCP domain. 3 N-linked (GlcNAc...) asparagine glycosylation sites follow: Asn-118, Asn-132, and Asn-175. 5 disulfide bridges follow: Cys-194–Cys-201, Cys-197–Cys-206, Cys-210–Cys-241, Cys-219–Cys-235, and Cys-226–Cys-239. One can recognise a ShKT domain in the interval 210-241 (CQYKDMSFWCKRLEYVCKHPGLKKRCLATCQC).

It belongs to the CRISP family. As to quaternary structure, interacts with A1BG. Interacts with KNG1 isoform LMW. Expressed in submandibular gland.

The protein localises to the cytoplasmic vesicle. It is found in the secretory vesicle. This protein is supposed to help spermatozoa undergo functional maturation while they move from the testis to the ductus deferens. The polypeptide is Cysteine-rich secretory protein 3 (Crisp3) (Mus musculus (Mouse)).